A 266-amino-acid polypeptide reads, in one-letter code: Ribonuclease HII (266 aa).

The region spanning 73 to 266 (SPVAGVDEAG…NCGSRQKCEG (194 aa)) is the RNase H type-2 domain. Aspartate 79, glutamate 80, and aspartate 173 together coordinate a divalent metal cation.

The protein belongs to the RNase HII family. The cofactor is Mn(2+). Mg(2+) serves as cofactor.

The protein localises to the cytoplasm. The catalysed reaction is Endonucleolytic cleavage to 5'-phosphomonoester.. Endonuclease that specifically degrades the RNA of RNA-DNA hybrids. The chain is Ribonuclease HII from Pelotomaculum thermopropionicum (strain DSM 13744 / JCM 10971 / SI).